We begin with the raw amino-acid sequence, 310 residues long: Mitochondrial citrate transporter F (310 aa).

Solcar repeat units follow at residues 23–108, 115–207, and 216–303; these read KKVH…LKNH, PPGL…FKRL, and DNMG…HKKL. A run of 6 helical transmembrane segments spans residues 29 to 49, 85 to 105, 122 to 142, 186 to 206, 222 to 242, and 275 to 296; these read FWFGGSASCFAAAVTHPLDLV, SAAILRQLTYSTTRFGIYEEL, IGMASASGFIGGMAGNPADVL, NSTRAVLMTTSQLASYDTFKR, FTASFMAGFVATTVCSPVDVI, and AFRGWVPSFIRLGPHTIATFIF.

It belongs to the mitochondrial carrier (TC 2.A.29) family.

The protein localises to the mitochondrion inner membrane. Its function is as follows. Mitochondrial transporter that does not mediate citrate export from mitochondria to cytoplasm. Its exact function has still to be determined. This Aspergillus niger (strain ATCC 1015 / CBS 113.46 / FGSC A1144 / LSHB Ac4 / NCTC 3858a / NRRL 328 / USDA 3528.7) protein is Mitochondrial citrate transporter F.